Consider the following 297-residue polypeptide: HTH-type transcriptional regulator ArgP (297 aa).

One can recognise an HTH lysR-type domain in the interval 4–60 (PDYRTLQALDAVIRERGFERAAQKLCITQSAVSQRIKQLENLFGQPLLVRTVPPRPT). Residues 21 to 40 (FERAAQKLCITQSAVSQRIK) constitute a DNA-binding region (H-T-H motif).

Belongs to the LysR transcriptional regulatory family. Homodimer.

Functionally, controls the transcription of genes involved in arginine and lysine metabolism. The sequence is that of HTH-type transcriptional regulator ArgP from Serratia proteamaculans (strain 568).